The sequence spans 131 residues: Profilin (131 aa).

The protein belongs to the profilin family. Occurs in many kinds of cells as a complex with monomeric actin in a 1:1 ratio.

It is found in the cytoplasm. Its subcellular location is the cytoskeleton. Functionally, binds to actin and affects the structure of the cytoskeleton. At high concentrations, profilin prevents the polymerization of actin, whereas it enhances it at low concentrations. Has a high affinity for poly-proline. The polypeptide is Profilin (Citrullus lanatus (Watermelon)).